Consider the following 456-residue polypeptide: tRNA modification GTPase MnmE (456 aa).

(6S)-5-formyl-5,6,7,8-tetrahydrofolate contacts are provided by arginine 23, glutamate 85, and arginine 124. One can recognise a TrmE-type G domain in the interval 220–376; the sequence is GVAVLIAGKP…LKESIFQTFI (157 aa). K(+) is bound at residue asparagine 230. GTP-binding positions include 230–235, 249–255, and 274–277; these read NVGKSS, TSVPGTT, and DTAG. Serine 234 serves as a coordination point for Mg(2+). K(+)-binding residues include threonine 249, valine 251, and threonine 254. Position 255 (threonine 255) interacts with Mg(2+). Lysine 456 contacts (6S)-5-formyl-5,6,7,8-tetrahydrofolate.

It belongs to the TRAFAC class TrmE-Era-EngA-EngB-Septin-like GTPase superfamily. TrmE GTPase family. As to quaternary structure, homodimer. Heterotetramer of two MnmE and two MnmG subunits. K(+) serves as cofactor.

The protein localises to the cytoplasm. Functionally, exhibits a very high intrinsic GTPase hydrolysis rate. Involved in the addition of a carboxymethylaminomethyl (cmnm) group at the wobble position (U34) of certain tRNAs, forming tRNA-cmnm(5)s(2)U34. This is tRNA modification GTPase MnmE from Geobacter sulfurreducens (strain ATCC 51573 / DSM 12127 / PCA).